The sequence spans 434 residues: Glutamate-1-semialdehyde 2,1-aminomutase (434 aa).

Lys-273 carries the post-translational modification N6-(pyridoxal phosphate)lysine.

The protein belongs to the class-III pyridoxal-phosphate-dependent aminotransferase family. HemL subfamily. As to quaternary structure, homodimer. The cofactor is pyridoxal 5'-phosphate.

The protein resides in the cytoplasm. The catalysed reaction is (S)-4-amino-5-oxopentanoate = 5-aminolevulinate. The protein operates within porphyrin-containing compound metabolism; protoporphyrin-IX biosynthesis; 5-aminolevulinate from L-glutamyl-tRNA(Glu): step 2/2. This is Glutamate-1-semialdehyde 2,1-aminomutase from Polynucleobacter asymbioticus (strain DSM 18221 / CIP 109841 / QLW-P1DMWA-1) (Polynucleobacter necessarius subsp. asymbioticus).